The sequence spans 103 residues: Small ribosomal subunit protein uS10 (103 aa).

It belongs to the universal ribosomal protein uS10 family. In terms of assembly, part of the 30S ribosomal subunit.

Involved in the binding of tRNA to the ribosomes. This Shewanella amazonensis (strain ATCC BAA-1098 / SB2B) protein is Small ribosomal subunit protein uS10.